The chain runs to 608 residues: Histone-arginine methyltransferase CARM1 (608 aa).

Ala-2 is modified (N-acetylalanine). Residues 27–138 (ATVSVFPGAR…GHTLERSVFS (112 aa)) are interaction with C9orf72. In terms of domain architecture, SAM-dependent MTase PRMT-type spans 146-453 (AVQYFQFYGY…KRQSYDISIV (308 aa)). Residues Gln-159, Arg-168, Gly-192, and Glu-214 each contribute to the S-adenosyl-L-methionine site. Ser-216 is modified (phosphoserine). Lys-227 participates in a covalent cross-link: Glycyl lysine isopeptide (Lys-Gly) (interchain with G-Cter in ubiquitin). 2 residues coordinate S-adenosyl-L-methionine: Glu-243 and Ser-271. The tract at residues 346 to 379 (RILMAKSVKYTVNFLEAKEGDLHRIEIPFKFHML) is required for nuclear translocation. The segment at 499 to 608 (TGSTYNLSSG…IPTNTMHYGS (110 aa)) is transactivation domain. The residue at position 550 (Arg-550) is a Dimethylated arginine.

Belongs to the class I-like SAM-binding methyltransferase superfamily. Protein arginine N-methyltransferase family. Homodimer. Interacts with NR1H4. Interacts with SNRPC. Interacts with the C-terminus of NCOA2/GRIP1, NCO3/ACTR and NCOA1/SRC1. Part of a complex consisting of CARM1, EP300/P300 and NCOA2/GRIP1. Interacts with FLII, TP53, myogenic factor MEF2, EP300/P300, TRIM24, CREBBP and CTNNB1. Interacts with RELA. Identified in a complex containing CARM1, TRIM24 and NCOA2/GRIP1. Interacts with NCOA3/SRC3. Interacts with SKP2. Interacts (via PH domain-like fold) with C9orf72. Interacts with PARP1; promoting PARP1 recruimtent to replication forks. As to quaternary structure, (Microbial infection) Interacts with HTLV-1 protein Tax. In terms of processing, auto-methylated on Arg-550. Methylation enhances transcription coactivator activity. Methylation is required for its role in the regulation of pre-mRNA alternative splicing. Phosphorylation at Ser-216 is strongly increased during mitosis, and decreases rapidly to a very low, basal level after entry into the G1 phase of the cell cycle. Phosphorylation at Ser-216 may promote location in the cytosol. Phosphorylation at Ser-216 interferes with S-adenosyl-L-methionine binding and strongly reduces methyltransferase activity. Post-translationally, ubiquitinated by E3 ubiquitin-protein ligase complex containing FBXO9 at Lys-227; leading to proteasomal degradation. In terms of tissue distribution, overexpressed in prostate adenocarcinomas and high-grade prostatic intraepithelial neoplasia.

It is found in the nucleus. Its subcellular location is the cytoplasm. The protein resides in the chromosome. It catalyses the reaction L-arginyl-[protein] + 2 S-adenosyl-L-methionine = N(omega),N(omega)-dimethyl-L-arginyl-[protein] + 2 S-adenosyl-L-homocysteine + 2 H(+). Methylation of H3R17 (H3R17me) by CARM1 is stimulated by preacetylation of H3 'Lys-18' (H3K18ac) H3 'Lys-23' (H3K23ac) by EP300 and blocked by citrullination of H3 'Arg-17' (H3R17ci) by PADI4. In terms of biological role, methylates (mono- and asymmetric dimethylation) the guanidino nitrogens of arginyl residues in several proteins involved in DNA packaging, transcription regulation, pre-mRNA splicing, and mRNA stability. Recruited to promoters upon gene activation together with histone acetyltransferases from EP300/P300 and p160 families, methylates histone H3 at 'Arg-17' (H3R17me), forming mainly asymmetric dimethylarginine (H3R17me2a), leading to activation of transcription via chromatin remodeling. During nuclear hormone receptor activation and TCF7L2/TCF4 activation, acts synergically with EP300/P300 and either one of the p160 histone acetyltransferases NCOA1/SRC1, NCOA2/GRIP1 and NCOA3/ACTR or CTNNB1/beta-catenin to activate transcription. During myogenic transcriptional activation, acts together with NCOA3/ACTR as a coactivator for MEF2C. During monocyte inflammatory stimulation, acts together with EP300/P300 as a coactivator for NF-kappa-B. Acts as a coactivator for PPARG, promotes adipocyte differentiation and the accumulation of brown fat tissue. Plays a role in the regulation of pre-mRNA alternative splicing by methylation of splicing factors. Also seems to be involved in p53/TP53 transcriptional activation. Methylates EP300/P300, both at 'Arg-2142', which may loosen its interaction with NCOA2/GRIP1, and at 'Arg-580' and 'Arg-604' in the KIX domain, which impairs its interaction with CREB and inhibits CREB-dependent transcriptional activation. Also methylates arginine residues in RNA-binding proteins PABPC1, ELAVL1 and ELAV4, which may affect their mRNA-stabilizing properties and the half-life of their target mRNAs. Acts as a transcriptional coactivator of ACACA/acetyl-CoA carboxylase by enriching H3R17 methylation at its promoter, thereby positively regulating fatty acid synthesis. Independently of its methyltransferase activity, involved in replication fork progression: promotes PARP1 recruitment to replication forks, leading to poly-ADP-ribosylation of chromatin at replication forks and reduced fork speed. The polypeptide is Histone-arginine methyltransferase CARM1 (CARM1) (Homo sapiens (Human)).